The primary structure comprises 302 residues: Probable lipid kinase YegS-like (302 aa).

The 129-residue stretch at 1 to 129 (MDKDKVLLVL…IDLGAVNGKL (129 aa)) folds into the DAGKc domain. Residues Thr-39, 65–71 (GDGTLRE), and Thr-92 contribute to the ATP site. Residues Arg-210, Asp-213, and Leu-215 each coordinate Mg(2+). The active-site Proton acceptor is Glu-268.

Belongs to the diacylglycerol/lipid kinase family. YegS lipid kinase subfamily. Mg(2+) serves as cofactor. The cofactor is Ca(2+).

The protein localises to the cytoplasm. Probably phosphorylates lipids; the in vivo substrate is unknown. The polypeptide is Probable lipid kinase YegS-like (Pseudomonas aeruginosa (strain UCBPP-PA14)).